Consider the following 126-residue polypeptide: Glycine cleavage system H protein (126 aa).

The Lipoyl-binding domain maps to 21–103; sequence TVTVGISDHA…YESGWIARIK (83 aa). Lys62 carries the N6-lipoyllysine modification.

It belongs to the GcvH family. As to quaternary structure, the glycine cleavage system is composed of four proteins: P, T, L and H. It depends on (R)-lipoate as a cofactor.

Its function is as follows. The glycine cleavage system catalyzes the degradation of glycine. The H protein shuttles the methylamine group of glycine from the P protein to the T protein. The polypeptide is Glycine cleavage system H protein (Aliivibrio fischeri (strain MJ11) (Vibrio fischeri)).